A 214-amino-acid chain; its full sequence is tRNA (guanine-N(7)-)-methyltransferase (214 aa).

S-adenosyl-L-methionine is bound by residues E43, E68, D95, and D117. The active site involves D117. Substrate-binding positions include K121, D153, and 191-194 (TEYE).

It belongs to the class I-like SAM-binding methyltransferase superfamily. TrmB family.

The enzyme catalyses guanosine(46) in tRNA + S-adenosyl-L-methionine = N(7)-methylguanosine(46) in tRNA + S-adenosyl-L-homocysteine. The protein operates within tRNA modification; N(7)-methylguanine-tRNA biosynthesis. Its function is as follows. Catalyzes the formation of N(7)-methylguanine at position 46 (m7G46) in tRNA. The polypeptide is tRNA (guanine-N(7)-)-methyltransferase (Lachnoclostridium phytofermentans (strain ATCC 700394 / DSM 18823 / ISDg) (Clostridium phytofermentans)).